The following is a 247-amino-acid chain: Probable transcriptional regulatory protein YebC (247 aa).

Positions 1–20 (MAGHSKWANTRHRKAAQDAK) are disordered.

This sequence belongs to the TACO1 family.

It is found in the cytoplasm. In Salmonella arizonae (strain ATCC BAA-731 / CDC346-86 / RSK2980), this protein is Probable transcriptional regulatory protein YebC.